We begin with the raw amino-acid sequence, 474 residues long: Trehalose-6-phosphate synthase (474 aa).

Arginine 10 contributes to the D-glucose 6-phosphate binding site. 22–23 (GG) provides a ligand contact to UDP-alpha-D-glucose. 2 residues coordinate D-glucose 6-phosphate: tyrosine 77 and aspartate 131. 2 residues coordinate UDP-alpha-D-glucose: arginine 263 and lysine 268. D-glucose 6-phosphate is bound at residue arginine 301. Residues phenylalanine 340 and 366-370 (LVAKE) contribute to the UDP-alpha-D-glucose site.

This sequence belongs to the glycosyltransferase 20 family. Homotetramer.

The enzyme catalyses D-glucose 6-phosphate + UDP-alpha-D-glucose = alpha,alpha-trehalose 6-phosphate + UDP + H(+). It participates in glycan biosynthesis; trehalose biosynthesis. Functionally, probably involved in the osmoprotection via the biosynthesis of trehalose. Catalyzes the transfer of glucose from UDP-alpha-D-glucose (UDP-Glc) to D-glucose 6-phosphate (Glc-6-P) to form trehalose-6-phosphate. Acts with retention of the anomeric configuration of the UDP-sugar donor. The polypeptide is Trehalose-6-phosphate synthase (Klebsiella pneumoniae subsp. pneumoniae (strain ATCC 700721 / MGH 78578)).